The primary structure comprises 423 residues: AP-1 complex subunit mu-2 (423 aa).

The region spanning 168-421 (KNEVFIDVIE…ITQSGDYQLR (254 aa)) is the MHD domain.

Belongs to the adaptor complexes medium subunit family. As to quaternary structure, adaptor protein complex 1 (AP-1) is a heterotetramer composed of two large adaptins (gamma-type subunit AP1G1 and beta-type subunit AP1B1), a medium adaptin (mu-type subunit AP1M1 or AP1M2) and a small adaptin (sigma-type subunit AP1S1 or AP1S2 or AP1S3). Interacts with P2X4. In terms of processing, phosphorylation of membrane-bound AP1M1/AP1M2 increases its affinity for sorting signals.

The protein localises to the cytoplasmic vesicle. Its subcellular location is the clathrin-coated vesicle membrane. It is found in the golgi apparatus. Functionally, subunit of clathrin-associated adaptor protein complex 1 that plays a role in protein sorting in the trans-Golgi network (TGN) and endosomes. The AP complexes mediate the recruitment of clathrin to membranes and the recognition of sorting signals within the cytosolic tails of transmembrane cargo molecules. The polypeptide is AP-1 complex subunit mu-2 (Bos taurus (Bovine)).